Reading from the N-terminus, the 493-residue chain is Probable cytosol aminopeptidase (493 aa).

Mn(2+)-binding residues include K265 and D270. K277 is an active-site residue. Mn(2+) is bound by residues D288, D347, and E349. R351 is an active-site residue.

The protein belongs to the peptidase M17 family. The cofactor is Mn(2+).

The protein localises to the cytoplasm. It carries out the reaction Release of an N-terminal amino acid, Xaa-|-Yaa-, in which Xaa is preferably Leu, but may be other amino acids including Pro although not Arg or Lys, and Yaa may be Pro. Amino acid amides and methyl esters are also readily hydrolyzed, but rates on arylamides are exceedingly low.. It catalyses the reaction Release of an N-terminal amino acid, preferentially leucine, but not glutamic or aspartic acids.. Its function is as follows. Presumably involved in the processing and regular turnover of intracellular proteins. Catalyzes the removal of unsubstituted N-terminal amino acids from various peptides. The sequence is that of Probable cytosol aminopeptidase from Hydrogenovibrio crunogenus (strain DSM 25203 / XCL-2) (Thiomicrospira crunogena).